Consider the following 380-residue polypeptide: Variant-surface-glycoprotein phospholipase C (380 aa).

Residues 31 to 205 form the PI-PLC X-box domain; sequence ITQVCFVGSH…SRRRIFLVVG (175 aa).

As to quaternary structure, monomer.

It is found in the membrane. The catalysed reaction is a 6-(alpha-D-glucosaminyl)-1-(1,2-diacyl-sn-glycero-3-phospho)-1D-myo-inositol = 6-(alpha-D-glucosaminyl)-1D-myo-inositol 1,2-cyclic phosphate + a 1,2-diacyl-sn-glycerol. In terms of biological role, by hydrolysis of the attached glycolipid, releases soluble variant surface glycoprotein containing phosphoinositol from the cell wall of T.brucei after cell lysis. It also cleaves similar membrane anchors on some mammalian proteins. VSG lipase may play a role in processes such as parasite differentiation or antigenic variation. This Trypanosoma cruzi protein is Variant-surface-glycoprotein phospholipase C.